We begin with the raw amino-acid sequence, 315 residues long: Ribose-phosphate pyrophosphokinase (315 aa).

ATP contacts are provided by residues 41–43 and 100–101; these read DGE and RQ. Residues H134 and D173 each coordinate Mg(2+). Residue K196 is part of the active site. Residues R198, D222, and 226 to 230 each bind D-ribose 5-phosphate; that span reads DTAGT.

This sequence belongs to the ribose-phosphate pyrophosphokinase family. Class I subfamily. As to quaternary structure, homohexamer. Requires Mg(2+) as cofactor.

Its subcellular location is the cytoplasm. The enzyme catalyses D-ribose 5-phosphate + ATP = 5-phospho-alpha-D-ribose 1-diphosphate + AMP + H(+). It participates in metabolic intermediate biosynthesis; 5-phospho-alpha-D-ribose 1-diphosphate biosynthesis; 5-phospho-alpha-D-ribose 1-diphosphate from D-ribose 5-phosphate (route I): step 1/1. Involved in the biosynthesis of the central metabolite phospho-alpha-D-ribosyl-1-pyrophosphate (PRPP) via the transfer of pyrophosphoryl group from ATP to 1-hydroxyl of ribose-5-phosphate (Rib-5-P). The chain is Ribose-phosphate pyrophosphokinase from Bacillus caldolyticus.